The chain runs to 159 residues: Ribonuclease H (159 aa).

In terms of domain architecture, RNase H type-1 spans 4–145 (THKQVNIYTD…CDKLARDAAE (142 aa)). Residues Asp-13, Glu-51, Asp-73, and Asp-137 each coordinate Mg(2+).

This sequence belongs to the RNase H family. As to quaternary structure, monomer. Mg(2+) serves as cofactor.

It is found in the cytoplasm. The catalysed reaction is Endonucleolytic cleavage to 5'-phosphomonoester.. Its function is as follows. Endonuclease that specifically degrades the RNA of RNA-DNA hybrids. This chain is Ribonuclease H, found in Shewanella denitrificans (strain OS217 / ATCC BAA-1090 / DSM 15013).